A 332-amino-acid polypeptide reads, in one-letter code: Azadirone synthase LFS (332 aa).

Positions 181-286 constitute a Fe2OG dioxygenase domain; it reads ANANYTNMFH…RYSTGTFICP (106 aa). Histidine 208, aspartate 210, and histidine 269 together coordinate Fe cation. Arginine 277 is a 2-oxoglutarate binding site.

This sequence belongs to the iron/ascorbate-dependent oxidoreductase family. Fe(2+) is required as a cofactor. Mainly expressed in petioles and, to a lower extent, in roots.

It catalyses the reaction (1S,3bR,4R,5aR,9aR,9bR,11aS)-1-(1-hydroxy-4-oxobutan-2-yl)-3b,6,6,9a,11a-pentamethyl-7-oxo-1H,2H,3bH,4H,5H,5aH,6H,7H,9aH,9bH,10H,11H,11aH-cyclopenta[a]phenanthren-4-yl acetate + 2-oxoglutarate + O2 = azadirone + succinate + CO2 + 2 H2O. Its pathway is secondary metabolite biosynthesis; terpenoid biosynthesis. Functionally, 2-oxoglutarate-Fe(II) type oxidoreductase involved in the biosynthesis of limonoids triterpene natural products such as azadirachtin, an antifeedant widely used as bioinsecticide, and possessing many medicinal applications including anti-tumoral, anti-malarial, anti-rheumatic, antibacterial, anti-inflammatory, anti-pyretic and diuretic effects. Catalyzes the formation of azadirone. The protein is Azadirone synthase LFS of Melia azedarach (Chinaberry tree).